Here is a 1049-residue protein sequence, read N- to C-terminus: Vacuolar membrane protease (1049 aa).

Over M1–P11 the chain is Cytoplasmic. The chain crosses the membrane as a helical span at residues M12 to I32. Topologically, residues Q33–T438 are vacuolar. N50 is a glycosylation site (N-linked (GlcNAc...) asparagine). The disordered stretch occupies residues D114–Y135. The N-linked (GlcNAc...) asparagine glycan is linked to N157. Residues H221 and D233 each coordinate Zn(2+). Residue E267 is the Proton acceptor of the active site. E268, E293, and H365 together coordinate Zn(2+). A helical membrane pass occupies residues L439–Y459. The Cytoplasmic segment spans residues L460 to Y495. The chain crosses the membrane as a helical span at residues P496–I516. The Vacuolar portion of the chain corresponds to N517–Y526. Residues S527–C547 form a helical membrane-spanning segment. Residues N548 to R557 are Cytoplasmic-facing. Residues G558–Y578 form a helical membrane-spanning segment. Over E579–S585 the chain is Vacuolar. Residues G586–G606 form a helical membrane-spanning segment. Residues E607–Y740 lie on the Cytoplasmic side of the membrane. Positions S621–S686 are disordered. Residues Q622–H633 are compositionally biased toward basic and acidic residues. A compositionally biased stretch (acidic residues) spans G655–V664. Residues L741–A761 form a helical membrane-spanning segment. Residues L762–L773 are Vacuolar-facing. A helical membrane pass occupies residues L774 to I794. The Cytoplasmic segment spans residues H795–M801. The chain crosses the membrane as a helical span at residues P802–F822. At S823–V1049 the chain is on the vacuolar side. The N-linked (GlcNAc...) asparagine glycan is linked to N914.

It belongs to the peptidase M28 family. The cofactor is Zn(2+).

The protein resides in the vacuole membrane. In terms of biological role, may be involved in vacuolar sorting and osmoregulation. The polypeptide is Vacuolar membrane protease (Botryotinia fuckeliana (strain B05.10) (Noble rot fungus)).